The following is a 318-amino-acid chain: Oncosphere antigen A (318 aa).

Fibronectin type-III domains follow at residues 6–103, 109–207, and 211–308; these read IPQN…TPLP, KPSF…ISRA, and VPQN…TPSV.

The protein is Oncosphere antigen A (ONCA) of Hydatigena taeniaeformis (Feline tapeworm).